The following is a 587-amino-acid chain: DELLA protein GAIP-B (587 aa).

The tract at residues 1–23 (MKREHHHLHPRPDPPSMAAAPNG) is disordered. Positions 46–50 (DELLA) match the DELLA motif motif. Residues 209 to 577 (VDSQENGIQL…RPLIVTSAWK (369 aa)) enclose the GRAS domain. Positions 216-270 (IQLVHALMACAEAVQQNNLNLAEALEKRIGYLAVSQAGAMRKVATFFAEALARRI) are leucine repeat I (LRI). The VHIID stretch occupies residues 288-353 (QLHFYESSPY…SGPPAFRLTG (66 aa)). The VHIID signature appears at 319 to 323 (VHVID). A leucine repeat II (LRII) region spans residues 367–399 (DVGWKLAKLVETINVEFEYRGFVANSLADLDAS). The tract at residues 411–498 (VVVNSVFELH…EMYLGKQICN (88 aa)) is PFYRE. The short motif at 419-423 (LHKLL) is the LXXLL motif element. The interval 501 to 577 (ACEGSDRVEW…RPLIVTSAWK (77 aa)) is SAW.

The protein belongs to the GRAS family. DELLA subfamily. In terms of processing, phosphorylated. Ubiquitinated. Upon GA application it is ubiquitinated, leading to its subsequent degradation.

The protein resides in the nucleus. Functionally, probable transcriptional regulator that acts as a repressor of the gibberellin (GA) signaling pathway. Probably acts by participating in large multiprotein complexes that represses transcription of GA-inducible genes. Upon GA application, it is degraded by the proteasome, allowing the GA signaling pathway. This chain is DELLA protein GAIP-B (GAIPB), found in Cucurbita maxima (Pumpkin).